Consider the following 277-residue polypeptide: Large ribosomal subunit protein uL2 (277 aa).

Residues 227–277 are disordered; it reads VMNPVDHPHGGGEGRTSGGRHPVTPWGVPTKGKKTRSKTKASDRLIMRRRK. The segment covering 266-277 has biased composition (basic and acidic residues); sequence KASDRLIMRRRK.

This sequence belongs to the universal ribosomal protein uL2 family. As to quaternary structure, part of the 50S ribosomal subunit. Forms a bridge to the 30S subunit in the 70S ribosome.

Functionally, one of the primary rRNA binding proteins. Required for association of the 30S and 50S subunits to form the 70S ribosome, for tRNA binding and peptide bond formation. It has been suggested to have peptidyltransferase activity; this is somewhat controversial. Makes several contacts with the 16S rRNA in the 70S ribosome. This chain is Large ribosomal subunit protein uL2, found in Magnetococcus marinus (strain ATCC BAA-1437 / JCM 17883 / MC-1).